The sequence spans 97 residues: Small ribosomal subunit protein eS25 (97 aa).

The tract at residues M1 to A24 is disordered. Residues K9–G18 are compositionally biased toward basic residues.

The protein belongs to the eukaryotic ribosomal protein eS25 family. As to quaternary structure, component of the small ribosomal subunit (SSU). Mature N.crassa ribosomes consist of a small (40S) and a large (60S) subunit. The 40S small subunit contains 1 molecule of ribosomal RNA (18S rRNA) and at least 32 different proteins. The large 60S subunit contains 3 rRNA molecules (26S, 5.8S and 5S rRNA) and at least 42 different proteins.

It is found in the cytoplasm. Component of the ribosome, a large ribonucleoprotein complex responsible for the synthesis of proteins in the cell. The small ribosomal subunit (SSU) binds messenger RNAs (mRNAs) and translates the encoded message by selecting cognate aminoacyl-transfer RNA (tRNA) molecules. The large subunit (LSU) contains the ribosomal catalytic site termed the peptidyl transferase center (PTC), which catalyzes the formation of peptide bonds, thereby polymerizing the amino acids delivered by tRNAs into a polypeptide chain. The nascent polypeptides leave the ribosome through a tunnel in the LSU and interact with protein factors that function in enzymatic processing, targeting, and the membrane insertion of nascent chains at the exit of the ribosomal tunnel. The protein is Small ribosomal subunit protein eS25 (rps-25) of Neurospora crassa (strain ATCC 24698 / 74-OR23-1A / CBS 708.71 / DSM 1257 / FGSC 987).